A 207-amino-acid chain; its full sequence is dITP/XTP pyrophosphatase (207 aa).

16 to 21 (SNNKGK) is a binding site for substrate. Asp79 serves as the catalytic Proton acceptor. Asp79 provides a ligand contact to Mg(2+). Substrate-binding positions include Ser80, 166 to 169 (FGYD), Lys189, and 194 to 195 (HR).

This sequence belongs to the HAM1 NTPase family. As to quaternary structure, homodimer. Requires Mg(2+) as cofactor.

The enzyme catalyses XTP + H2O = XMP + diphosphate + H(+). It carries out the reaction dITP + H2O = dIMP + diphosphate + H(+). It catalyses the reaction ITP + H2O = IMP + diphosphate + H(+). In terms of biological role, pyrophosphatase that catalyzes the hydrolysis of nucleoside triphosphates to their monophosphate derivatives, with a high preference for the non-canonical purine nucleotides XTP (xanthosine triphosphate), dITP (deoxyinosine triphosphate) and ITP. Seems to function as a house-cleaning enzyme that removes non-canonical purine nucleotides from the nucleotide pool, thus preventing their incorporation into DNA/RNA and avoiding chromosomal lesions. The sequence is that of dITP/XTP pyrophosphatase from Acinetobacter baumannii (strain ATCC 17978 / DSM 105126 / CIP 53.77 / LMG 1025 / NCDC KC755 / 5377).